Consider the following 421-residue polypeptide: MAVDVTEYHLSVIKSPPGWEVGVYAAGALALLGIAAVSLWKLWTSGSFPSPSPFPNYDYRYLQQKYGEAYVEAKLKRVPPWNAQRTTTRGPPSRKGSLSIEDTFESISELGPLELMGRELDLAPYGTLRKSQSADSLNSISSVSNTFGQDFTLGQVEVSMDYDGASHTLHVAVLQGKDLLEREEATFESCFMRVSLLPDEQIVGISRIQRNAYSIFFDEKFSVPLDPTALEEKSLRFSVFGIDEDERNVSTGVVELKLSVLDLPLQPFSGWLYLQDQNKAADAVGEILLSLSYLPTAERLTVVVVKAKNLIWTNDKTTADPFVKVYLLQDGRKMSKKKTAVKRDDPNPVFNEAMIFSVPAIVLQDLSLRVTVAESSSDGRGDNVGHVIIGPGASGMGTTHWNQMLATLRRPVSMWHPVRRN.

At 1-18 (MAVDVTEYHLSVIKSPPG) the chain is on the vesicular side. The chain crosses the membrane as a helical span at residues 19 to 39 (WEVGVYAAGALALLGIAAVSL). Topologically, residues 40 to 421 (WKLWTSGSFP…VSMWHPVRRN (382 aa)) are cytoplasmic. At Ser-97 the chain carries Phosphoserine; by PKA. Residues Ser-99 and Ser-214 each carry the phosphoserine modification. C2 domains lie at 152–272 (TLGQ…SGWL) and 283–416 (AVGE…SMWH).

The protein belongs to the synaptotagmin family. As to quaternary structure, homodimer. Can also form heterodimers. Interacts with SYT1. Phosphorylation of Ser-97 is required for mossy-fiber long-term potentiation. Expressed in the brain, specifically in neurons of the cerebellum, cortex, hippocampus, olfactory bulb, brainstem and spinal cord (at protein level).

The protein localises to the cytoplasmic vesicle. It localises to the secretory vesicle. Its subcellular location is the synaptic vesicle membrane. In terms of biological role, synaptic vesicle phosphoprotein that enhances spontaneous neurotransmitter release but does not effect induced neurotransmitter release. Unlike other synaptotagmins, it does not bind Ca(2+) or phospholipids. Essential for mossy-fiber long-term potentiation in the hippocampus. The polypeptide is Synaptotagmin-12 (Rattus norvegicus (Rat)).